Consider the following 51-residue polypeptide: Protein YrhD (51 aa).

This is Protein YrhD (yrhD) from Escherichia coli (strain K12).